Consider the following 364-residue polypeptide: Dual-specificity RNA methyltransferase RlmN (364 aa).

The active-site Proton acceptor is the E91. The region spanning 102–337 (GTLRITQCLS…AIIRKSKGQD (236 aa)) is the Radical SAM core domain. A disulfide bridge links C109 with C342. The [4Fe-4S] cluster site is built by C116, C120, and C123. Residues 169 to 170 (GE), S201, 223 to 225 (SLH), and N299 contribute to the S-adenosyl-L-methionine site. C342 serves as the catalytic S-methylcysteine intermediate.

It belongs to the radical SAM superfamily. RlmN family. It depends on [4Fe-4S] cluster as a cofactor.

It localises to the cytoplasm. The enzyme catalyses adenosine(2503) in 23S rRNA + 2 reduced [2Fe-2S]-[ferredoxin] + 2 S-adenosyl-L-methionine = 2-methyladenosine(2503) in 23S rRNA + 5'-deoxyadenosine + L-methionine + 2 oxidized [2Fe-2S]-[ferredoxin] + S-adenosyl-L-homocysteine. It catalyses the reaction adenosine(37) in tRNA + 2 reduced [2Fe-2S]-[ferredoxin] + 2 S-adenosyl-L-methionine = 2-methyladenosine(37) in tRNA + 5'-deoxyadenosine + L-methionine + 2 oxidized [2Fe-2S]-[ferredoxin] + S-adenosyl-L-homocysteine. Functionally, specifically methylates position 2 of adenine 2503 in 23S rRNA and position 2 of adenine 37 in tRNAs. m2A2503 modification seems to play a crucial role in the proofreading step occurring at the peptidyl transferase center and thus would serve to optimize ribosomal fidelity. The polypeptide is Dual-specificity RNA methyltransferase RlmN (Nitratidesulfovibrio vulgaris (strain DP4) (Desulfovibrio vulgaris)).